A 773-amino-acid polypeptide reads, in one-letter code: Mitochondrial inner membrane m-AAA protease component yta12 (773 aa).

Residues 83-119 (FSVTSKRSQNGSSGSNSDANGRKNGQKNDDSKKKGLN) form a disordered region. Low complexity predominate over residues 87 to 101 (SKRSQNGSSGSNSDA). A run of 2 helical transmembrane segments spans residues 126 to 146 (VFEIALNGNTILGGILVAYIL) and 239 to 259 (VLATLLSFAPTLLIIGSVIYL). Val-298, Ala-299, Thr-340, Gly-341, Lys-342, Thr-343, Leu-344, and His-479 together coordinate ATP. Position 561 (His-561) interacts with Zn(2+). Residue Glu-562 is part of the active site. Zn(2+)-binding residues include His-565 and Asp-638. Positions 752 to 773 (EYKNDHDPRNPPIPPSPQQPSA) are disordered. Over residues 761 to 773 (NPPIPPSPQQPSA) the composition is skewed to pro residues.

It in the N-terminal section; belongs to the AAA ATPase family. In the C-terminal section; belongs to the peptidase M41 family. In terms of assembly, component of the m-AAA protease complex. Requires Zn(2+) as cofactor.

The protein localises to the mitochondrion membrane. It catalyses the reaction ATP + H2O = ADP + phosphate + H(+). Functionally, catalytic component of the m-AAA protease, a protease that plays a key role in proteostasis of inner mitochondrial membrane proteins. Possesses both ATPase and protease activities: the ATPase activity is required to unfold substrates, threading them into the internal proteolytic cavity for hydrolysis into small peptide fragments. The complex is necessary for the assembly of mitochondrial respiratory chain and ATPase complexes. The m-AAA protease carries out protein quality control in the inner membrane of the mitochondria by mediating degradation of mistranslated or misfolded polypeptides. It also mediates protein maturation of the mitochondrial ribosomal subunit mrpl32/bL32m by catalyzing the cleavage of the presequence of mrpl32/bL32m prior to assembly into the mitochondrial ribosome. Also acts as a membrane protein dislocase: required to dislocate moderately hydrophobic transmembrane segments from the membrane. The sequence is that of Mitochondrial inner membrane m-AAA protease component yta12 (yta12) from Schizosaccharomyces pombe (strain 972 / ATCC 24843) (Fission yeast).